The following is a 320-amino-acid chain: Lipoyl synthase (320 aa).

Over residues 1 to 29 (MIGKLVRDLKIPDQRHPEKAHRPDNDQPR) the composition is skewed to basic and acidic residues. The segment at 1-32 (MIGKLVRDLKIPDQRHPEKAHRPDNDQPRKPS) is disordered. Residues C60, C65, C71, C86, C90, C93, and S300 each contribute to the [4Fe-4S] cluster site. The 219-residue stretch at 71–289 (CWGQGHATMM…EKAAYGKGFL (219 aa)) folds into the Radical SAM core domain.

The protein belongs to the radical SAM superfamily. Lipoyl synthase family. The cofactor is [4Fe-4S] cluster.

The protein localises to the cytoplasm. The enzyme catalyses [[Fe-S] cluster scaffold protein carrying a second [4Fe-4S](2+) cluster] + N(6)-octanoyl-L-lysyl-[protein] + 2 oxidized [2Fe-2S]-[ferredoxin] + 2 S-adenosyl-L-methionine + 4 H(+) = [[Fe-S] cluster scaffold protein] + N(6)-[(R)-dihydrolipoyl]-L-lysyl-[protein] + 4 Fe(3+) + 2 hydrogen sulfide + 2 5'-deoxyadenosine + 2 L-methionine + 2 reduced [2Fe-2S]-[ferredoxin]. It functions in the pathway protein modification; protein lipoylation via endogenous pathway; protein N(6)-(lipoyl)lysine from octanoyl-[acyl-carrier-protein]: step 2/2. In terms of biological role, catalyzes the radical-mediated insertion of two sulfur atoms into the C-6 and C-8 positions of the octanoyl moiety bound to the lipoyl domains of lipoate-dependent enzymes, thereby converting the octanoylated domains into lipoylated derivatives. This Cereibacter sphaeroides (strain ATCC 17025 / ATH 2.4.3) (Rhodobacter sphaeroides) protein is Lipoyl synthase.